Consider the following 757-residue polypeptide: Polyribonucleotide nucleotidyltransferase (757 aa).

The Mg(2+) site is built by Asp482 and Asp488. Residues 549–608 (PRMLSFYIDKDKISAAIGSKGKNIRSVCERSNAKIEIGDDGKVSVFATSGTEAEIAKSMM) form the KH domain. An S1 motif domain is found at 618–686 (GSIVDVKVVR…KGGCPKLSRR (69 aa)). Residues 698 to 757 (GELYNEERKDGPNDRDNYYNNSFSRKPGGSHHKRPPRPHSGFSNRNRPKFGNNDSSSGFY) are disordered. The span at 702–714 (NEERKDGPNDRDN) shows a compositional bias: basic and acidic residues. Basic residues predominate over residues 725-734 (GGSHHKRPPR).

Belongs to the polyribonucleotide nucleotidyltransferase family. The cofactor is Mg(2+).

The protein localises to the cytoplasm. It carries out the reaction RNA(n+1) + phosphate = RNA(n) + a ribonucleoside 5'-diphosphate. Its function is as follows. Involved in mRNA degradation. Catalyzes the phosphorolysis of single-stranded polyribonucleotides processively in the 3'- to 5'-direction. This Wolbachia pipientis wMel protein is Polyribonucleotide nucleotidyltransferase.